The sequence spans 1028 residues: Formate dehydrogenase major subunit (1028 aa).

A signal peptide (tat-type signal) is located at residues 1–33 (MQVSRRKFFKICAGGMAGTSAAMLGFAPANVLA). Positions 43 to 114 (AFESRNTCTY…GSLDYVNSES (72 aa)) constitute a 4Fe-4S Mo/W bis-MGD-type domain. Residues Cys50, Cys53, Cys57, and Cys100 each coordinate [4Fe-4S] cluster. A non-standard amino acid (selenocysteine) is located at residue Sec204.

This sequence belongs to the prokaryotic molybdopterin-containing oxidoreductase family. In terms of assembly, formate dehydrogenase is a membrane-bound complex, formed by subunits alpha, beta and gamma. Mo-bis(molybdopterin guanine dinucleotide) serves as cofactor. [4Fe-4S] cluster is required as a cofactor. In terms of processing, predicted to be exported by the Tat system. The position of the signal peptide cleavage has not been experimentally proven.

The protein resides in the periplasm. It catalyses the reaction formate + NAD(+) = CO2 + NADH. Functionally, allows to use formate as major electron donor during anaerobic respiration. Subunit alpha possibly forms the active site. The protein is Formate dehydrogenase major subunit (fdxG) of Haemophilus influenzae (strain ATCC 51907 / DSM 11121 / KW20 / Rd).